A 1279-amino-acid chain; its full sequence is Sterol regulatory element-binding protein cleavage-activating protein (1279 aa).

At 1–18 the chain is on the cytoplasmic side; the sequence is MTLTERLREKISRAFYNH. Residues 19 to 39 traverse the membrane as a helical segment; it reads GLLCASYPIPIILFTGFCILA. The Lumenal segment spans residues 40-279; the sequence is CCYPLLKLPL…SLVHVHFKEE (240 aa). Positions 46–284 are loop-1; the sequence is KLPLPGTGPV…HFKEEIGVAE (239 aa). Residues 60 to 80 are disordered; sequence PVKDYSPPPVDSDRKQGEPTE. The N-linked (GlcNAc...) asparagine glycan is linked to asparagine 263. Residues 280 to 300 form a helical membrane-spanning segment; the sequence is IGVAELIPLVTTYIILFAYIY. An SSD domain is found at 284–442; it reads ELIPLVTTYI…MLFFTTVLSI (159 aa). At 301 to 312 the chain is on the cytoplasmic side; that stretch reads FSTRKIDMVKSK. The chain crosses the membrane as a helical span at residues 313–333; the sequence is WGLALAAVVTVLSSLLMSVGL. At 334–344 the chain is on the lumenal side; that stretch reads CTLFGLTPTLN. The chain crosses the membrane as a helical span at residues 345-365; sequence GGEIFPYLVVVIGLENVLVLT. Residues 366–401 are Cytoplasmic-facing; the sequence is KSVVSTPVDLEVKLRIAQGLSSESWSIMKNMATELG. The chain crosses the membrane as a helical span at residues 402 to 422; the sequence is IILIGYFTLVPAIQEFCLFAV. Valine 423 is a topological domain (lumenal). The chain crosses the membrane as a helical span at residues 424-444; it reads GLVSDFFLQMLFFTTVLSIDI. Residues 445–518 lie on the Cytoplasmic side of the membrane; the sequence is RRMELADLNK…FLARTRLAQR (74 aa). The short motif at 447 to 452 is the ER export signal element; it reads MELADL. Glycyl lysine isopeptide (Lys-Gly) (interchain with G-Cter in ubiquitin) cross-links involve residues lysine 454 and lysine 466. The helical transmembrane segment at 519–539 threads the bilayer; that stretch reads LIMAGTVVWIGILVYTDPAGL. Residues 535 to 710 form a loop-7 region; the sequence is DPAGLRNYLA…QAHGDVTLYK (176 aa). The Lumenal portion of the chain corresponds to 540–709; that stretch reads RNYLAAQVTE…VQAHGDVTLY (170 aa). Residues 579–615 are disordered; the sequence is IFPPDAPKLPENQTSPGESPERGGPAEVVHDSPVPEV. Residues asparagine 590 and asparagine 641 are each glycosylated (N-linked (GlcNAc...) asparagine). The interval 668–696 is disordered; that stretch reads EGRHPQDGRSAWPPPGPIPAGHWEAGPKG. The chain crosses the membrane as a helical span at residues 710–730; that stretch reads KVAALGLATGIVLVLLLLCLY. Topologically, residues 731–1279 are cytoplasmic; it reads RVLCPRNYGQ…YVPSVLEKLD (549 aa). Residues 731–1279 are interaction with SREBF2; the sequence is RVLCPRNYGQ…YVPSVLEKLD (549 aa). One copy of the WD 1 repeat lies at 771–811; it reads VLRGHLMDIECLASDGMLLVSCCLAGHVCVWDAQTGDCLTR. The segment at 811-904 is disordered; it reads RIPRPGRQRR…PRHRAVCGRS (94 aa). A phosphoserine mark is found at serine 822, serine 838, and serine 851. The span at 877–891 shows a compositional bias: polar residues; it reads IDTNFSAQPRSSQPT. Serine 907 and serine 937 each carry phosphoserine. The interval 931–962 is disordered; the sequence is PALRPPSPGPVLSQAPEDEGGSPEKGSPSLAW. WD repeat units follow at residues 952–1002 and 1005–1042; these read SPEK…LCCS and EVSS…ALSP. Arginine 1051 is modified (omega-N-methylarginine). 4 WD repeats span residues 1077 to 1114, 1117 to 1155, 1158 to 1195, and 1197 to 1235; these read AHQK…CLFT, GHSG…RVSH, AHRG…KFYS, and QQDL…LLQT.

This sequence belongs to the WD repeat SCAP family. In terms of assembly, membrane region forms a homotetramer. Component of the SCAP-SREBP complex (composed of SCAP and SREBF1/SREBP1 or SREBF2/SREBP2); interacts with SREBF1/SREBP1 or SREBF2/SREBP2 through its C-terminal cytoplasmic domain. Forms a ternary complex with INSIG1 or INSIG2 through its transmembrane domains at high sterol concentrations. Interacts with PAQR3; the interaction anchors the SCAP-SREBP complex to the Golgi apparatus in low cholesterol conditions. Interacts with the SEC23-SEC24 complex in a SAR1-GTP-dependent manner through an ER export signal in its third cytoplasmic loop. Interacts with RNF139; the interaction inhibits the interaction of SCAP with SEC24B and hampering the ER to Golgi transport of the SCAP-SREBP complex. Interacts with SPRING1. Post-translationally, ubiquitinated at Lys-454 and Lys-466. RNF145 triggers ubiquitination of SCAP, likely inhibiting SCAP-SREBP complex transport to the Golgi apparatus and the subsequent processing/maturation of SREBF2/SREBP2.

Its subcellular location is the endoplasmic reticulum membrane. It localises to the golgi apparatus membrane. The protein resides in the cytoplasmic vesicle. The protein localises to the COPII-coated vesicle membrane. Escort protein required for cholesterol as well as lipid homeostasis. Regulates export of the SCAP-SREBP complex from the endoplasmic reticulum to the Golgi upon low cholesterol, thereby regulating the processing of sterol regulatory element-binding proteins (SREBPs) SREBF1/SREBP1 and SREBF2/SREBP2. At high sterol concentrations, formation of a ternary complex with INSIG (INSIG1 or INSIG2) leads to mask the ER export signal in SCAP, promoting retention of the complex in the endoplasmic reticulum. Low sterol concentrations trigger release of INSIG, a conformational change in the SSD domain of SCAP, unmasking of the ER export signal, promoting recruitment into COPII-coated vesicles and transport of the SCAP-SREBP to the Golgi: in the Golgi, SREBPs are then processed, releasing the transcription factor fragment of SREBPs from the membrane, its import into the nucleus and up-regulation of LDLR, INSIG1 and the mevalonate pathway. Binds cholesterol via its SSD domain. This chain is Sterol regulatory element-binding protein cleavage-activating protein, found in Homo sapiens (Human).